Reading from the N-terminus, the 1093-residue chain is Error-prone DNA polymerase (1093 aa).

The tract at residues 1–55 (MGWFNGPPSWAEMERVLDSKPRRAGESAAPEPDGPLSRGRATYRPPDEGRAARSS) is disordered. Over residues 12-25 (EMERVLDSKPRRAG) the composition is skewed to basic and acidic residues.

Belongs to the DNA polymerase type-C family. DnaE2 subfamily.

It localises to the cytoplasm. It carries out the reaction DNA(n) + a 2'-deoxyribonucleoside 5'-triphosphate = DNA(n+1) + diphosphate. Its function is as follows. DNA polymerase involved in damage-induced mutagenesis and translesion synthesis (TLS). It is not the major replicative DNA polymerase. The polypeptide is Error-prone DNA polymerase (Mycolicibacterium paratuberculosis (strain ATCC BAA-968 / K-10) (Mycobacterium paratuberculosis)).